Consider the following 417-residue polypeptide: Imidazolonepropionase (417 aa).

Fe(3+) contacts are provided by H80 and H82. The Zn(2+) site is built by H80 and H82. Residues R89, Y152, and H187 each contribute to the 4-imidazolone-5-propanoate site. An N-formimidoyl-L-glutamate-binding site is contributed by Y152. Residue H252 coordinates Fe(3+). H252 provides a ligand contact to Zn(2+). E255 contacts 4-imidazolone-5-propanoate. D326 lines the Fe(3+) pocket. D326 provides a ligand contact to Zn(2+). N-formimidoyl-L-glutamate contacts are provided by N328 and G330. S331 is a binding site for 4-imidazolone-5-propanoate.

The protein belongs to the metallo-dependent hydrolases superfamily. HutI family. It depends on Zn(2+) as a cofactor. Fe(3+) is required as a cofactor.

Its subcellular location is the cytoplasm. It catalyses the reaction 4-imidazolone-5-propanoate + H2O = N-formimidoyl-L-glutamate. Its pathway is amino-acid degradation; L-histidine degradation into L-glutamate; N-formimidoyl-L-glutamate from L-histidine: step 3/3. In terms of biological role, catalyzes the hydrolytic cleavage of the carbon-nitrogen bond in imidazolone-5-propanoate to yield N-formimidoyl-L-glutamate. It is the third step in the universal histidine degradation pathway. The protein is Imidazolonepropionase of Bacteroides fragilis (strain YCH46).